A 725-amino-acid polypeptide reads, in one-letter code: Eukaryotic elongation factor 2 kinase (725 aa).

Residues 1–12 (MADEDLIFRLEG) are compositionally biased toward basic and acidic residues. Positions 1–38 (MADEDLIFRLEGVDGGQSPRAGHDGDSDGDSDDEEGYF) are disordered. N-acetylalanine is present on A2. S18 and S27 each carry phosphoserine. The span at 27 to 36 (SDGDSDDEEG) shows a compositional bias: acidic residues. S61 and S66 each carry phosphoserine; by autocatalysis. A phosphoserine mark is found at S70, S71, S72, and S74. S78 carries the post-translational modification Phosphoserine; by autocatalysis and TRPM7. The tract at residues 81–94 (FKEAWKHAIQKAKH) is calmodulin-binding. Residues 116-326 (RYNAVTGEWL…ICESMGLAPF (211 aa)) enclose the Alpha-type protein kinase domain. Position 243 is a phosphoserine (S243). Residue 296–302 (GDGNLGV) coordinates ATP. Residues T348 and T353 each carry the phosphothreonine; by autocatalysis modification. 2 disordered regions span residues 352–405 (GTEE…PHSQ) and 423–477 (SRDH…SLGS). S359 is modified (phosphoserine; by MAPK13 and CDK1). The segment covering 363 to 377 (RTLSGSRPPLLRPLS) has biased composition (low complexity). A Phosphoserine; by autocatalysis, RPS6KA1 and RPS6KB1 modification is found at S366. The segment covering 386 to 404 (SDVTFDSLPSSPSSATPHS) has biased composition (polar residues). A Phosphoserine modification is found at S392. Phosphoserine; by AMPK is present on S398. 2 stretches are compositionally biased toward basic and acidic residues: residues 423-436 (SRDH…RESE) and 445-469 (SEKR…RKYE). A Phosphoserine modification is found at S435. Residue S445 is modified to Phosphoserine; by autocatalysis. Phosphoserine is present on S470. Residue S474 is modified to Phosphoserine; by autocatalysis. At S477 the chain carries Phosphoserine. S491 is modified (phosphoserine; by autocatalysis). At S500 the chain carries Phosphoserine; by PKA.

The protein belongs to the protein kinase superfamily. Alpha-type protein kinase family. As to quaternary structure, monomer or homodimer. Interacts with Calmodulin/CALM1; this interaction is strictly required for phosphorylation activity. Autophosphorylated at multiple residues, Thr-348 being the major site. Phosphorylated by AMP-activated protein kinase AMPK at Ser-398 leading to EEF2K activation and protein synthesis inhibition. Phosphorylated by TRPM7 at Ser-78 resulting in improved protein stability, higher EE2F phosphorylated and subsequently reduced rate of protein synthesis. Phosphorylation by other kinases such as CDK1 and MAPK13 at Ser-359 or RPS6KA1 and RPS6KB1 at Ser-366 instead decrease EEF2K activity and promote protein synthesis.

It carries out the reaction [translation elongation factor 2] + ATP = [translation elongation factor 2]-phosphate + ADP + H(+). Undergoes calcium/calmodulin-dependent intramolecular autophosphorylation, and this results in it becoming partially calcium/calmodulin-independent. In terms of biological role, threonine kinase that regulates protein synthesis by controlling the rate of peptide chain elongation. Upon activation by a variety of upstream kinases including AMPK or TRPM7, phosphorylates the elongation factor EEF2 at a single site, renders it unable to bind ribosomes and thus inactive. In turn, the rate of protein synthesis is reduced. The sequence is that of Eukaryotic elongation factor 2 kinase (EEF2K) from Homo sapiens (Human).